We begin with the raw amino-acid sequence, 147 residues long: Lysozyme C-2 (147 aa).

Positions 1–18 (MKALVILGFLFLSVAVQG) are cleaved as a signal peptide. The region spanning 19–147 (KVFERCELAR…VSSYVEGCTL (129 aa)) is the C-type lysozyme domain. 4 cysteine pairs are disulfide-bonded: Cys-24–Cys-145, Cys-48–Cys-133, Cys-83–Cys-99, and Cys-95–Cys-113. Residues Glu-53 and Asp-71 contribute to the active site.

Belongs to the glycosyl hydrolase 22 family. In terms of assembly, monomer. As to expression, stomach-specific.

The enzyme catalyses Hydrolysis of (1-&gt;4)-beta-linkages between N-acetylmuramic acid and N-acetyl-D-glucosamine residues in a peptidoglycan and between N-acetyl-D-glucosamine residues in chitodextrins.. In terms of biological role, lysozymes have primarily a bacteriolytic function; those in tissues and body fluids are associated with the monocyte-macrophage system and enhance the activity of immunoagents. The protein is Lysozyme C-2 (LYZ2) of Bos taurus (Bovine).